The following is an 880-amino-acid chain: Protein transport protein SEC23 A (880 aa).

Polar residues predominate over residues 1–13 (MANLPKSSVNYPG). Residues 1-95 (MANLPKSSVN…PPGPPVFNTP (95 aa)) form a disordered region. Pro residues predominate over residues 20-36 (PNRPSPQPDRTPVPHSP). Residues 57–70 (MSSPSMKSPSLLSP) show a composition bias toward low complexity. Residues Cys-204, Cys-207, Cys-226, and Cys-229 each contribute to the Zn(2+) site. The zinc finger-like stretch occupies residues 204–229 (CLNCGAYSNPYSSILIGSGQWQCVIC).

Belongs to the SEC23/SEC24 family. SEC24 subfamily. In terms of assembly, component of the coat protein complex II (COPII), composed of at least five proteins: the Sec23/24 complex, the Sec13/31 complex and Sar1. As to expression, mostly expressed in seedlings, roots, cotyledons, leaves, trichomes, leaf primordia and flowers, and, to a lower extent, in mature siliques.

It is found in the cytoplasmic vesicle. It localises to the COPII-coated vesicle membrane. The protein localises to the endoplasmic reticulum membrane. Its subcellular location is the membrane. In terms of biological role, component of the coat protein complex II (COPII) which promotes the formation of transport vesicles from the endoplasmic reticulum (ER). The coat has two main functions, the physical deformation of the endoplasmic reticulum membrane into vesicles and the selection of cargo molecules. May contribute to COPII-coated vesicles formation and ER-Golgi vesicle transport. Together with SEC23D, essential for pollen wall development and exine patterning, probably by regulating endoplasmic reticulum (ER) export of lipids and proteins (e.g. sporopollenin) necessary for pollen wall formation. Also involved in plastid physiology in anther tapetal cells. This chain is Protein transport protein SEC23 A, found in Arabidopsis thaliana (Mouse-ear cress).